The chain runs to 138 residues: Basic phospholipase A2 ammodytoxin A (138 aa).

The N-terminal stretch at 1–16 (MRTLWIVAVCLIGVEG) is a signal peptide. Disulfide bonds link C42–C131, C44–C60, C59–C111, C65–C138, C66–C104, C73–C97, and C91–C102. 3 residues coordinate Ca(2+): Y43, G45, and G47. Residue H63 is part of the active site. D64 is a binding site for Ca(2+). D105 is an active-site residue.

The protein belongs to the phospholipase A2 family. Group II subfamily. D49 sub-subfamily. As to quaternary structure, monomer. Binds to calmodulin, coagulation factor X (F10), M-type PLA2 receptor (R-180). May also bind to 14-3-3 proteins gamma (YWHAG) and epsilon (YWHAE), and R25, a mitochondrial membrane protein. Requires Ca(2+) as cofactor. In terms of tissue distribution, expressed by the venom gland.

Its subcellular location is the secreted. It localises to the host cytoplasm. The protein localises to the host cytosol. It catalyses the reaction a 1,2-diacyl-sn-glycero-3-phosphocholine + H2O = a 1-acyl-sn-glycero-3-phosphocholine + a fatty acid + H(+). Snake venom phospholipase A2 (PLA2) that acts as a presynaptic neurotoxin, an inhibitor of blood coagulation, and has been found to bind with high affinity to intracellular proteins. The response of indirectly stimulated neuromuscular preparations to ammodytoxin (Atx) is triphasic. The first phase, the transient inhibition of the acetylcholine (ACh) release, starts soon after the addition of Atx and lasts for several minutes. This phase is probably independent of Atx enzymatic activity. The effect may be due to the specific binding of the toxin to presynaptic receptors. These receptors, called N-type receptors, are still unidentified. It is noteworthy that a neuronal isoform of the M-type PLA2 receptor (R180) has been identified as a high-affinity receptor for Atx in neuronal plasma membranes. It was demonstrated however that this receptor is not essential for expression of neurotoxicity by Atx. The second phase corresponds to an augmentation of neurotransmitter release. A peak is reached 10-20 minutes after exposure of the preparation to Atx and is followed by a gradual reduction. In this phase, the enzymatic activity of Atx of the mammalian is not significant. It is speculated that the increased release of neurotransmitter in this phase is induced by the interference of Atx with voltage-gated potassium channels. Measurements of ionic currents showed however that voltage-gated potassium channels are not affected by Atx. The third phase of the response of neuromuscular preparations to Atx, which corresponds to a complete and irreversible paralysis, is clearly dependent on the hydrolytic activity of the toxin. In addition to its presynaptic neurotoxicity, Atx shows an anticoagulant activity by binding with high affinity to activated coagulation factor X (F10) thus inhibiting the formation of the prothrombinase complex (FX/FV) and its activity (IC(50) is 20 nM). Surprisingly, Atx was discovered to bind intracellular proteins such as calmodulin (CaM) (IC(50) is 6 nM), 14-3-3 proteins gamma (YWHAG) and epsilon (YWHAE) (by similarity with AtxC), as well as R25 (by similarity with AtxC), a mitochondrial integral membrane protein found in cerebral cortex. These findings raised a doubt about the dogma of the exclusively extracellular action of PLA2s, defended by the potential instability of these molecules in the reducing environment of the eukaryotic cytosol coupled with their possible inability to act as enzymes in this cellular compartment, due to too low concentration of calcium ions. This hypothesis was challenged efficiently by demonstrating the internalization of AtxA into a culture cells, but still remains to be directly demonstrated in vivo. PLA2 catalyzes the calcium-dependent hydrolysis of the 2-acyl groups in 3-sn-phosphoglycerides. The protein is Basic phospholipase A2 ammodytoxin A of Vipera ammodytes ammodytes (Western sand viper).